The sequence spans 609 residues: MCGIVGAIAQRDVAEILLEGLRRLEYRGYDSAGLAVVDAEGHMTRLRRLGKVQMLAQAAEEHPLHGGTGIAHTRWATHGEPSEVNAHPHVSEHIVVVHNGIIENHEPLREELKARGYTFVSETDTEVIAHLVNWELKQGGTLREAVLRAIPQLRGAYGTVIMDSRHPDTLLAARSGSPLVIGLGMGENFIASDQLALLPVTRRFIFLEEGDIAEITRRSVNIFDKTGAEVKRQDIESNLQYDAGDKGIYRHYMQKEIYEQPNAIKNTLTGRISHGQVDLSELGPNADELLSKVEHIQILACGTSYNSGMVSRYWFESLAGIPCDVEIASEFRYRKSAVRRNSLMITLSQSGETADTLAGLRLSKELGYLGSLAICNVPGSSLVRESDLALMTNAGTEIGVASTKAFTTQLTVLLMLVAKLSRLKGLDASIEHDIVHGLQALPSRIEQMLSQDKRIEALAEDFSDKHHALFLGRGDQYPIALEGALKLKEISYIHAEAYAAGELKHGPLALIDADMPVIVVAPNNELLEKLKSNIEEVRARGGQLYVFADQDAGFVSSDNMHIIEMPHVEEVIAPIFYTVPLQLLAYHVALIKGTDVDQPRNLAKSVTVE.

The active-site Nucleophile; for GATase activity is the C2. One can recognise a Glutamine amidotransferase type-2 domain in the interval 2-218 (CGIVGAIAQR…EGDIAEITRR (217 aa)). SIS domains are found at residues 286–426 (ADEL…LKGL) and 458–599 (LAED…VDQP). K604 serves as the catalytic For Fru-6P isomerization activity.

In terms of assembly, homodimer. In pull-down experiments interacts with CedA.

The protein localises to the cytoplasm. It carries out the reaction D-fructose 6-phosphate + L-glutamine = D-glucosamine 6-phosphate + L-glutamate. Catalyzes the first step in hexosamine metabolism, converting fructose-6P into glucosamine-6P using glutamine as a nitrogen source. The sequence is that of Glutamine--fructose-6-phosphate aminotransferase [isomerizing] (glmS) from Escherichia coli (strain K12).